The primary structure comprises 505 residues: Peroxisome proliferator-activated receptor gamma (505 aa).

O-linked (GlcNAc) threonine glycosylation occurs at threonine 84. Serine 112 bears the Phosphoserine; by MAPK mark. The nuclear receptor DNA-binding region spans 136-210 (AIECRVCGDK…VGMSHNAIRF (75 aa)). 2 consecutive NR C4-type zinc fingers follow at residues 139–159 (CRVCGDKASGFHYGVHACEGC) and 176–198 (CDLNCRIHKKSRNKCQYCRFQKC). Residues 205–280 (HNAIRFGRMP…DKSPFVIYDM (76 aa)) form an interaction with FAM120B region. The NR LBD domain maps to 238-503 (DLRALAKHLY…HPLLQEIYKD (266 aa)). Lysine 252 is covalently cross-linked (Glycyl lysine isopeptide (Lys-Gly) (interchain with G-Cter in ubiquitin)). The 9aaTAD signature appears at 495–503 (PLLQEIYKD).

It belongs to the nuclear hormone receptor family. NR1 subfamily. In terms of assembly, interacts with FOXO1 (acetylated form). Heterodimer with other nuclear receptors, such as RXRA. The heterodimer with the retinoic acid receptor RXRA is called adipocyte-specific transcription factor ARF6. Interacts with NCOA6 coactivator, leading to a strong increase in transcription of target genes. Interacts with coactivator PPARBP, leading to a mild increase in transcription of target genes. Interacts with NOCA7 in a ligand-inducible manner. Interacts with NCOA1 and NCOA2 LXXLL motifs. Interacts with ASXL1, ASXL2, DNTTIP2, FAM120B, MAP2K1/MEK1, NR0B2, PDPK1, PRDM16, PRMT2 and TGFB1I1. Interacts (when activated by agonist) with PPP5C. Interacts with HELZ2 and THRAP3; the interaction stimulates the transcriptional activity of PPARG. Interacts with PER2, the interaction is ligand dependent and blocks PPARG recruitment to target promoters. Interacts with NOCT. Interacts with ACTN4. Interacts (when in the liganded conformation) with GPS2. Interacts with CRY1 and CRY2 in a ligand-dependent manner. In the absence of hormonal ligand, interacts with TACC1. In macrophages, interacts with PAQR3 and STUB1; the interactions promote PPARG poylubiquitination and STUB1-mediated degradation. In terms of processing, phosphorylated by MAPK. The phosphorylation inhibits PPAR gamma activity. Post-translationally, O-GlcNAcylation at Thr-84 reduces transcriptional activity in adipocytes. Phosphorylated at basal conditions and dephosphorylated when treated with the ligand. May be dephosphorylated by PPP5C. The phosphorylated form may be inactive and dephosphorylation at induces adipogenic activity. In terms of processing, ubiquitinated by E3 ubiquitin-protein ligase complex containing FBXO9; leading to proteasomal degradation. Ubiquitinated at Lys-252 by TRIM55 leading to proteasomal degradation. Ubiquitinated by E3 ubiquitin-protein ligase STUB1/CHIP; leading to proteasomal degradation. As to expression, highest expression in adipose tissue.

The protein resides in the nucleus. Its subcellular location is the cytoplasm. PDPK1 activates its transcriptional activity independently of its kinase activity. Nuclear receptor that binds peroxisome proliferators such as hypolipidemic drugs and fatty acids. Once activated by a ligand, the nuclear receptor binds to DNA specific PPAR response elements (PPRE) and modulates the transcription of its target genes, such as acyl-CoA oxidase. It therefore controls the peroxisomal beta-oxidation pathway of fatty acids. Key regulator of adipocyte differentiation and glucose homeostasis. ARF6 acts as a key regulator of the tissue-specific adipocyte P2 (aP2) enhancer. Acts as a critical regulator of gut homeostasis by suppressing NF-kappa-B-mediated pro-inflammatory responses. Plays a role in the regulation of cardiovascular circadian rhythms by regulating the transcription of BMAL1 in the blood vessels. The protein is Peroxisome proliferator-activated receptor gamma (Pparg) of Rattus norvegicus (Rat).